A 130-amino-acid chain; its full sequence is Small ribosomal subunit protein uS11 (130 aa).

Belongs to the universal ribosomal protein uS11 family. Part of the 30S ribosomal subunit. Interacts with proteins S7 and S18. Binds to IF-3.

Its function is as follows. Located on the platform of the 30S subunit, it bridges several disparate RNA helices of the 16S rRNA. Forms part of the Shine-Dalgarno cleft in the 70S ribosome. This chain is Small ribosomal subunit protein uS11, found in Microcystis aeruginosa (strain NIES-843 / IAM M-2473).